The following is a 177-amino-acid chain: Large ribosomal subunit protein uL16 (177 aa).

This sequence belongs to the universal ribosomal protein uL16 family.

This chain is Large ribosomal subunit protein uL16, found in Natronomonas pharaonis (strain ATCC 35678 / DSM 2160 / CIP 103997 / JCM 8858 / NBRC 14720 / NCIMB 2260 / Gabara) (Halobacterium pharaonis).